The chain runs to 294 residues: Transcription factor nsy-7 (294 aa).

Disordered regions lie at residues 43-119 (CNLR…TPDL) and 167-191 (LRLP…DSPL). Polar residues-rich tracts occupy residues 52-63 (DQPTTSSNSVKE) and 81-115 (RRQS…SNDP). Residues 192 to 232 (QTRMKGWQREYIKEVIKDSHYPTEEELRDIEQKCDLSRKQI) constitute a DNA-binding region (homeobox; atypical). The disordered stretch occupies residues 238-274 (KRLTNPNRKPRVNHHDEKRKEQEERDSLADPDDDMIN). Positions 250-265 (NHHDEKRKEQEERDSL) are enriched in basic and acidic residues.

As to expression, expressed widely, including gut, the amphid sheath glial cells, and head and tail neurons including AWC, ASE, and ASH. Expressed in AWC (ON) olfactory neuron but not AWC (OFF).

The protein localises to the nucleus. Functionally, transcriptional regulator which binds DNA consensus sequence 5'-CCTTAAC-3'. Plays a role in establishing and maintaining asymmetric cell fates in chemosensory AWC neurons during larval neuronal development. This is achieved by repressing the expression of multiple AWC (OFF) genes, including srsx-3 and hlh-11 in the AWC (ON) neuron. Activates expression of sox-2 in the AWC (ON) neuron. This chain is Transcription factor nsy-7, found in Caenorhabditis elegans.